A 311-amino-acid chain; its full sequence is Aspartate carbamoyltransferase catalytic subunit (311 aa).

Residues Arg59 and Thr60 each contribute to the carbamoyl phosphate site. Lys87 contributes to the L-aspartate binding site. Carbamoyl phosphate contacts are provided by Arg109, His139, and Gln142. L-aspartate-binding residues include Arg172 and Arg224. Residues Ala265 and Pro266 each coordinate carbamoyl phosphate.

The protein belongs to the aspartate/ornithine carbamoyltransferase superfamily. ATCase family. In terms of assembly, heterododecamer (2C3:3R2) of six catalytic PyrB chains organized as two trimers (C3), and six regulatory PyrI chains organized as three dimers (R2).

It carries out the reaction carbamoyl phosphate + L-aspartate = N-carbamoyl-L-aspartate + phosphate + H(+). Its pathway is pyrimidine metabolism; UMP biosynthesis via de novo pathway; (S)-dihydroorotate from bicarbonate: step 2/3. Functionally, catalyzes the condensation of carbamoyl phosphate and aspartate to form carbamoyl aspartate and inorganic phosphate, the committed step in the de novo pyrimidine nucleotide biosynthesis pathway. In Streptococcus equi subsp. equi (strain 4047), this protein is Aspartate carbamoyltransferase catalytic subunit.